Here is a 642-residue protein sequence, read N- to C-terminus: Aryl hydrocarbon receptor nuclear translocator homolog (642 aa).

The bHLH domain occupies 13 to 66 (ASRENHCEIERRRRNKMTAYITELSDMVPTCSALARKPDKLTILRMAVAHMKAL). PAS domains are found at residues 85 to 156 (DQEL…ESQN) and 271 to 341 (TAAN…LKQK). The PAC domain maps to 346 to 389 (SLLYRARAKNSEYVWLRTQAYAFLNPYTDEVEYIVCTNSSGKTM). A disordered region spans residues 450–612 (QAPTPQQQQQ…GPAGAGQPQG (163 aa)). Composition is skewed to polar residues over residues 463-482 (RPGS…THSP) and 528-554 (YQYQ…NGNR). Over residues 555 to 564 (QQAQPGAYQA) the composition is skewed to low complexity.

As to quaternary structure, efficient DNA binding requires dimerization with another bHLH protein. Heterodimer with ahr, trh or sim. As to expression, at stage 11, expression is detected in tracheal pits. At later stages, strong expression is also detected in the CNS.

The protein resides in the nucleus. Its function is as follows. Heterodimers of tgo/trh are involved in the control of breathless expression. Plays a role in the cellular or tissue response to oxygen deprivation. The protein is Aryl hydrocarbon receptor nuclear translocator homolog (tgo) of Drosophila melanogaster (Fruit fly).